The following is a 236-amino-acid chain: Sugar fermentation stimulation protein homolog (236 aa).

The protein belongs to the SfsA family.

The protein is Sugar fermentation stimulation protein homolog of Methylobacterium nodulans (strain LMG 21967 / CNCM I-2342 / ORS 2060).